The chain runs to 196 residues: ATP-dependent Clp protease proteolytic subunit (196 aa).

S101 acts as the Nucleophile in catalysis. H126 is a catalytic residue.

This sequence belongs to the peptidase S14 family. As to quaternary structure, component of the chloroplastic Clp protease core complex.

It localises to the plastid. The protein resides in the chloroplast stroma. The enzyme catalyses Hydrolysis of proteins to small peptides in the presence of ATP and magnesium. alpha-casein is the usual test substrate. In the absence of ATP, only oligopeptides shorter than five residues are hydrolyzed (such as succinyl-Leu-Tyr-|-NHMec, and Leu-Tyr-Leu-|-Tyr-Trp, in which cleavage of the -Tyr-|-Leu- and -Tyr-|-Trp bonds also occurs).. Its function is as follows. Cleaves peptides in various proteins in a process that requires ATP hydrolysis. Has a chymotrypsin-like activity. Plays a major role in the degradation of misfolded proteins. This chain is ATP-dependent Clp protease proteolytic subunit, found in Aethionema cordifolium (Lebanon stonecress).